The following is a 217-amino-acid chain: Translation initiation factor IF-3 (217 aa).

Residues 179-217 (PRKTPLVKKEEKEAAPTKAVRTIPAPPRPTAAKVAAQQA) are disordered.

This sequence belongs to the IF-3 family. Monomer.

It localises to the cytoplasm. IF-3 binds to the 30S ribosomal subunit and shifts the equilibrium between 70S ribosomes and their 50S and 30S subunits in favor of the free subunits, thus enhancing the availability of 30S subunits on which protein synthesis initiation begins. This Parasynechococcus marenigrum (strain WH8102) protein is Translation initiation factor IF-3.